The chain runs to 320 residues: Methionyl-tRNA formyltransferase (320 aa).

A (6S)-5,6,7,8-tetrahydrofolate-binding site is contributed by 114 to 117 (SLLP).

This sequence belongs to the Fmt family.

It carries out the reaction L-methionyl-tRNA(fMet) + (6R)-10-formyltetrahydrofolate = N-formyl-L-methionyl-tRNA(fMet) + (6S)-5,6,7,8-tetrahydrofolate + H(+). Functionally, attaches a formyl group to the free amino group of methionyl-tRNA(fMet). The formyl group appears to play a dual role in the initiator identity of N-formylmethionyl-tRNA by promoting its recognition by IF2 and preventing the misappropriation of this tRNA by the elongation apparatus. The polypeptide is Methionyl-tRNA formyltransferase (Acinetobacter baumannii (strain AB307-0294)).